The sequence spans 155 residues: Small ribosomal subunit protein uS7 (155 aa).

Belongs to the universal ribosomal protein uS7 family. In terms of assembly, part of the 30S ribosomal subunit. Contacts proteins S9 and S11.

One of the primary rRNA binding proteins, it binds directly to 16S rRNA where it nucleates assembly of the head domain of the 30S subunit. Is located at the subunit interface close to the decoding center, probably blocks exit of the E-site tRNA. This is Small ribosomal subunit protein uS7 from Chlorobium phaeobacteroides (strain BS1).